We begin with the raw amino-acid sequence, 129 residues long: RutC family protein PM1466 (129 aa).

It belongs to the RutC family.

This chain is RutC family protein PM1466, found in Pasteurella multocida (strain Pm70).